A 217-amino-acid polypeptide reads, in one-letter code: Proteasome subunit beta type-9 (217 aa).

Positions 1-18 are cleaved as a propeptide — removed in mature form; it reads MLGEEAEPQWISEEVKTG. The active-site Nucleophile is Thr-19.

It belongs to the peptidase T1B family. The 26S proteasome consists of a 20S proteasome core and two 19S regulatory subunits. The 20S proteasome core is composed of 28 subunits that are arranged in four stacked rings, resulting in a barrel-shaped structure. The two end rings are each formed by seven alpha subunits, and the two central rings are each formed by seven beta subunits. The catalytic chamber with the active sites is on the inside of the barrel. Component of the immunoproteasome, where it displaces the equivalent housekeeping subunit PSMB6. Autocleaved. The resulting N-terminal Thr residue of the mature subunit is responsible for the nucleophile proteolytic activity.

It is found in the cytoplasm. The protein localises to the nucleus. It catalyses the reaction Cleavage of peptide bonds with very broad specificity.. In terms of biological role, the proteasome is a multicatalytic proteinase complex which is characterized by its ability to cleave peptides with Arg, Phe, Tyr, Leu, and Glu adjacent to the leaving group at neutral or slightly basic pH. The proteasome has an ATP-dependent proteolytic activity. This subunit is involved in antigen processing to generate class I binding peptides. This is Proteasome subunit beta type-9 (psmb9) from Oryzias latipes (Japanese rice fish).